We begin with the raw amino-acid sequence, 246 residues long: MyoD family inhibitor domain-containing protein (246 aa).

Disordered regions lie at residues 1 to 93 and 134 to 164; these read MSQE…EEET and KIQS…ASPE. Residues 1 to 170 lie on the Extracellular side of the membrane; the sequence is MSQEREPFSP…ASPEDGCVHC (170 aa). The span at 63-87 shows a compositional bias: polar residues; it reads EDNSNSQPIKAQPQRLPQPNTSALE. The region spanning 74–246 is the MDFI domain; it reads QPQRLPQPNT…MECCGICFPS (173 aa). The helical transmembrane segment at 171–188 threads the bilayer; the sequence is ILTCLFCEFLTLCNIVVG. Topologically, residues 189–246 are cytoplasmic; sequence QASCGICTSEACCCCCTEEMGDDCNCPCDMDCGIMDACCESSDCLEICMECCGICFPS.

It belongs to the MDFI family. As to expression, expressed broadly at a low level in the early embryo.

It is found in the cytoplasm. The protein localises to the cell membrane. The protein resides in the secreted. Its function is as follows. Required to control the activity of various transcription factors through their sequestration in the cytoplasm. Retains nuclear Zic proteins in the cytoplasm and inhibits their transcriptional activation. Required for dorsoanterior development. Necessary for siamois to activate downstream target genes, including gsc, during execution of the dorsal organizer program. Also regulates the transcriptional activity of TCF7L1/TCF3 by interacting directly with TCF7L1/TCF3 and preventing it from binding DNA. Involved in the development of lymphatic vessel valves. It is required to promote lymphatic endothelial cell migration, in a process that involves down-regulation of integrin beta 1 activation and control of cell adhesion to the extracellular matrix. This chain is MyoD family inhibitor domain-containing protein, found in Xenopus laevis (African clawed frog).